A 493-amino-acid chain; its full sequence is Cytochrome P450 monooxygenase olcG (493 aa).

A helical transmembrane segment spans residues glycine 15–phenylalanine 35. Cysteine 429 provides a ligand contact to heme.

It belongs to the cytochrome P450 family. It depends on heme as a cofactor.

It localises to the membrane. Its pathway is secondary metabolite biosynthesis; terpenoid biosynthesis. Its function is as follows. Cytochrome P450 monooxygenase; part of the gene cluster that mediates the biosynthesis of 15-deoxyoxalicine B. The first step of the pathway is the synthesis of nicotinyl-CoA from nicotinic acid by the nicotinic acid-CoA ligase olcI. Nicotinyl-CoA is then a substrate of polyketide synthase olcA to produce 4-hydroxy-6-(3-pyridinyl)-2H-pyran-2-one (HPPO) which is further prenylated by the polyprenyl transferase olcH to yield geranylgeranyl-HPPO. Geranylgeranyl pyrophosphate is provided by the cluster-specific geranylgeranyl pyrophosphate synthase olcC. The FAD-dependent monooxygenase olcE catalyzes the epoxidation of geranylgeranyl-HPPO and the terpene cyclase olcD catalyzes the cyclization of the terpenoid component, resulting in the formation of the tricyclic terpene moiety seen in predecaturin E. The cytochrome P450 monooxygenase then catalyzes the allylic oxidation of predecaturin E, which is followed by spirocylization with concomitant loss of one molecule of water to form decaturin E. Decaturin E is the substrate of the cytochrome P450 monooxygenase olcJ which hydroxylates it at the C-29 position to form decaturin F. The short-chain dehydrogenase/reductase olcF may catalyze the oxidation of decaturin F to generate the 29-hydroxyl-27-one intermediate, and subsequent hemiacetal formation probably leads to the formation of decaturin C. The dioxygenase olcK may be a peroxisomal enzyme that catalyzes the hydroxylation of decaturin C into decaturin A once decaturin C is shuttled into the peroxisome by the MFS transporter olcL. Finally the cytochrome P450 monooxygenase olcB catalyzes the oxidative rearrangement to yield 15-deoxyoxalicine B. In the absence of olcJ, decaturin E may be shunted to a pathway in which it is oxidized to a ketone, possibly by olcF, to form decaturin D, which undergoes further allylic oxidation to yield decaturin G. Moreover, in the absence of oclK or oclL, oclB can convert decaturin C into 15-deoxyoxalicine A. This Penicillium canescens protein is Cytochrome P450 monooxygenase olcG.